Reading from the N-terminus, the 262-residue chain is tRNA pseudouridine synthase A (262 aa).

Aspartate 54 (nucleophile) is an active-site residue. Tyrosine 113 provides a ligand contact to substrate.

This sequence belongs to the tRNA pseudouridine synthase TruA family. As to quaternary structure, homodimer.

It catalyses the reaction uridine(38/39/40) in tRNA = pseudouridine(38/39/40) in tRNA. Formation of pseudouridine at positions 38, 39 and 40 in the anticodon stem and loop of transfer RNAs. The sequence is that of tRNA pseudouridine synthase A from Lactobacillus delbrueckii subsp. bulgaricus (strain ATCC BAA-365 / Lb-18).